Reading from the N-terminus, the 288-residue chain is Protein sprouty homolog 3 (288 aa).

In terms of domain architecture, SPR spans 154–260 (KCVPCTAARP…GYDSLRRPGC (107 aa)).

It belongs to the sprouty family. Interacts with TESK1. Interacts with USP11. Interacts with CAV1 (via C-terminus). In terms of tissue distribution, widely expressed; particularly in the fetal tissues. Expressed in the brain with expression the highest in Purkinje cells in the cerebellum (at protein level). Expressed in the myocardium of the heart.

The protein localises to the cytoplasm. Its function is as follows. Inhibits neurite branching, arbor length and neurite complexity. Inhibits EGF-mediated p42/44 ERK signaling. Negatively regulates the MAPK cascade, resulting in a reduction of extracellular matrix protein accumulation. May function as an antagonist of fibroblast growth factor (FGF) pathways and may negatively modulate respiratory organogenesis. The chain is Protein sprouty homolog 3 from Homo sapiens (Human).